The sequence spans 77 residues: U8-lycotoxin-Ls1l (77 aa).

An N-terminal signal peptide occupies residues 1-20 (MKLMIFTGLVLFAIVSLIEA). The propeptide occupies 21-26 (QAENEK).

The protein belongs to the neurotoxin 19 (CSTX) family. 08 (U8-Lctx) subfamily. In terms of processing, contains 4 disulfide bonds. Expressed by the venom gland.

It is found in the secreted. This chain is U8-lycotoxin-Ls1l, found in Lycosa singoriensis (Wolf spider).